The chain runs to 399 residues: PCI domain-containing protein 2 (399 aa).

Alanine 2 carries the N-acetylalanine modification. At serine 45 the chain carries Phosphoserine. The PCI domain maps to 210-391 (ITYKYYVGRK…QKLVVSKQNP (182 aa)).

Belongs to the CSN12 family. Component of the nuclear pore complex (NPC)-associated TREX-2 complex (transcription and export complex 2), composed of at least GANP, 2 copies of ENY2, PCID2, SEM1/DSS1, and either centrin CETN2 or centrin CETN3. The TREX-2 complex also associates with ALYREF/ALY and with the nucleoporin NUP153. Interacts with BRCA2. Interacts with SRCAP chromatin remodeling complex component ZNHIT1; the interaction results in inhibition of SRCAP complex activity, preventing the deposition of histone variant H2AZ1/H2A.Z to lymphoid fate regulator genes and restricting lymphoid lineage commitment. In terms of tissue distribution, highly expressed in bone marrow and haematopoietic progenitor cells but is almost undetectable in mature blood cells.

It is found in the cytoplasm. Its subcellular location is the nucleus. The protein localises to the nuclear pore complex. Required for B-cell survival through the regulation of the expression of cell-cycle checkpoint MAD2L1 protein during B cell differentiation. As a component of the TREX-2 complex, involved in the export of mRNAs to the cytoplasm through the nuclear pores. Binds and stabilizes BRCA2 and is thus involved in the control of R-loop-associated DNA damage and transcription-associated genomic instability. Blocks the activity of the SRCAP chromatin remodeling complex by interacting with SRCAP complex member ZNHIT1 and inhibiting its interaction with the complex. This prevents the deposition of histone variant H2AZ1/H2A.Z at the nucleosomes of key lymphoid fate regulator genes which suppresses their expression and restricts lymphoid lineage commitment. In Mus musculus (Mouse), this protein is PCI domain-containing protein 2 (Pcid2).